We begin with the raw amino-acid sequence, 101 residues long: Large ribosomal subunit protein P1 (101 aa).

Residues 65–89 (AAPAAAPAEEPKEEKKEEKKEEDTT) are disordered. A compositionally biased stretch (basic and acidic residues) spans 73–87 (EEPKEEKKEEKKEED).

Belongs to the eukaryotic ribosomal protein P1/P2 family. Part of the 50S ribosomal subunit. Homodimer, it forms part of the ribosomal stalk which helps the ribosome interact with GTP-bound translation factors. Forms a heptameric uL10/P0(P1)2(P1)2(P1)2 complex, where uL10/P0 forms an elongated spine to which the P1 dimers bind in a sequential fashion.

Functionally, forms part of the ribosomal stalk, playing a central role in the interaction of the ribosome with GTP-bound translation factors. The protein is Large ribosomal subunit protein P1 of Methanothermococcus thermolithotrophicus (Methanococcus thermolithotrophicus).